The primary structure comprises 755 residues: PWWP domain-containing protein 2A (755 aa).

Low complexity predominate over residues 1 to 15 (MAAVAAEAAATAASP). The segment at 1–153 (MAAVAAEAAA…VPPAGGDSTV (153 aa)) is disordered. The segment covering 64-76 (DEPPLPPPPPPPG) has biased composition (pro residues). 4 positions are modified to phosphoserine: Ser81, Ser102, Ser116, and Ser119. Residues 112–126 (ELPPSPASPPEQPPA) are compositionally biased toward pro residues. The interaction with HDAC1 and MTA1 stretch occupies residues 148 to 373 (GGDSTVSQLI…KLKTDHKVDG (226 aa)). Residue Lys208 forms a Glycyl lysine isopeptide (Lys-Gly) (interchain with G-Cter in SUMO2) linkage. Disordered stretches follow at residues 282-301 (YNQS…KRKM), 334-384 (KEIR…KRNA), 400-562 (KVSA…GSKN), and 578-626 (SSAS…SKEE). The segment covering 292 to 301 (RKIKRPKRKM) has biased composition (basic residues). Composition is skewed to basic and acidic residues over residues 346–356 (SKYEDKKRRNE) and 368–381 (DHKV…ESQK). Residues 403-421 (AQANTSKAQLSTKKVLQSK) are compositionally biased toward polar residues. The segment covering 422-444 (NMDHAKAREVLKIAKEKAQKKQN) has biased composition (basic and acidic residues). Residues 423–574 (MDHAKAREVL…SVYMTLNQKK (152 aa)) are interaction with the H2A.Z/H2AZ1. The segment covering 508–527 (SRCTSTRSAGEAPSENQSPS) has biased composition (polar residues). Residues 593 to 603 (SSNSECSSSES) are compositionally biased toward low complexity. One can recognise a PWWP domain in the interval 655–715 (VGDIVWAKIY…LSQLSPFLEN (61 aa)).

Component of a MTA1-specific subcomplex of the NuRD complex (M1HR), composed of PWWP2A, MTA1/2, HDAC1/2, and RBBP4/7 but does not contain CHD4 and MBD3. Interacts with MTA1; the interaction mediates the association of PWWP2A with the M1HR complex. Interacts with H2A.Z/H2AZ1. Interacts (via PWWP domain) with histone H3 trimethylated at 'Lys-36' (H3K36me3). Does not interact with CHD4 and MBD3. As to quaternary structure, interacts with MTA1 and with HDAC1 in a MTA1-dependent manner. Does not interact with CHD4 and MBD3.

The protein resides in the nucleus. Chromatin-binding protein that acts as an adapter between distinct nucleosome components (H3K36me3 or H2A.Z) and chromatin-modifying complexes, contributing to the regulation of the levels of histone acetylation at actively transcribed genes. Competes with CHD4 and MBD3 for interaction with MTA1 to form a NuRD subcomplex, preventing the formation of full NuRD complex (containing CHD4 and MBD3), leading to recruitment of HDACs to gene promoters resulting in turn in the deacetylation of nearby H3K27 and H2A.Z. Plays a role in facilitating transcriptional elongation and repression of spurious transcription initiation through regulation of histone acetylation. Essential for proper mitosis progression. The chain is PWWP domain-containing protein 2A (PWWP2A) from Homo sapiens (Human).